A 287-amino-acid chain; its full sequence is Oxaloacetate decarboxylase (287 aa).

Residue Ser-50 participates in substrate binding. Asp-88 lines the Mg(2+) pocket. 2 residues coordinate substrate: Arg-159 and His-235.

This sequence belongs to the isocitrate lyase/PEP mutase superfamily. Oxaloacetate decarboxylase family. Homotetramer; dimer of dimers. Mg(2+) is required as a cofactor.

It catalyses the reaction oxaloacetate + H(+) = pyruvate + CO2. Functionally, catalyzes the decarboxylation of oxaloacetate into pyruvate. Seems to play a role in maintaining cellular concentrations of bicarbonate and pyruvate. The sequence is that of Oxaloacetate decarboxylase from Marinomonas sp. (strain MWYL1).